A 164-amino-acid polypeptide reads, in one-letter code: Peptide deformylase (164 aa).

Fe cation-binding residues include Cys-87 and His-129. Glu-130 is an active-site residue. His-133 is a binding site for Fe cation.

The protein belongs to the polypeptide deformylase family. Fe(2+) serves as cofactor.

The enzyme catalyses N-terminal N-formyl-L-methionyl-[peptide] + H2O = N-terminal L-methionyl-[peptide] + formate. Removes the formyl group from the N-terminal Met of newly synthesized proteins. Requires at least a dipeptide for an efficient rate of reaction. N-terminal L-methionine is a prerequisite for activity but the enzyme has broad specificity at other positions. This chain is Peptide deformylase, found in Thermotoga petrophila (strain ATCC BAA-488 / DSM 13995 / JCM 10881 / RKU-1).